We begin with the raw amino-acid sequence, 336 residues long: Foldase protein PrsA (336 aa).

An N-terminal signal peptide occupies residues 1–22 (MKSAKKLLSVLCLGIFILTFTA). Cys-23 carries the N-palmitoyl cysteine lipid modification. Cys-23 is lipidated: S-diacylglycerol cysteine. Residues 194-286 (PNTMNVSHIL…FGYHIIKINS (93 aa)) enclose the PpiC domain.

This sequence belongs to the PrsA family.

The protein localises to the cell membrane. The catalysed reaction is [protein]-peptidylproline (omega=180) = [protein]-peptidylproline (omega=0). Its function is as follows. Plays a major role in protein secretion by helping the post-translocational extracellular folding of several secreted proteins. The sequence is that of Foldase protein PrsA from Clostridium botulinum (strain 657 / Type Ba4).